A 732-amino-acid chain; its full sequence is Protein kinase YpkA (732 aa).

One can recognise a Protein kinase domain in the interval 136-408 (VAETDKFAEG…SNEARLHEFL (273 aa)). ATP-binding positions include 142-150 (FAEGESHIS) and K163. D270 serves as the catalytic Proton acceptor.

It belongs to the protein kinase superfamily. Ser/Thr protein kinase family.

The protein resides in the secreted. The enzyme catalyses L-seryl-[protein] + ATP = O-phospho-L-seryl-[protein] + ADP + H(+). The catalysed reaction is L-threonyl-[protein] + ATP = O-phospho-L-threonyl-[protein] + ADP + H(+). Functionally, acts as a virulence determinant. This chain is Protein kinase YpkA (ypkA), found in Yersinia pseudotuberculosis serotype I (strain IP32953).